Reading from the N-terminus, the 274-residue chain is 3-methyl-2-oxobutanoate hydroxymethyltransferase (274 aa).

Mg(2+) is bound by residues Asp49 and Asp88. 3-methyl-2-oxobutanoate is bound by residues 49-50, Asp88, and Lys118; that span reads DS. Glu120 is a binding site for Mg(2+). Residue Glu187 is the Proton acceptor of the active site.

The protein belongs to the PanB family. Homodecamer; pentamer of dimers. Mg(2+) serves as cofactor.

Its subcellular location is the cytoplasm. The enzyme catalyses 3-methyl-2-oxobutanoate + (6R)-5,10-methylene-5,6,7,8-tetrahydrofolate + H2O = 2-dehydropantoate + (6S)-5,6,7,8-tetrahydrofolate. Its pathway is cofactor biosynthesis; (R)-pantothenate biosynthesis; (R)-pantoate from 3-methyl-2-oxobutanoate: step 1/2. In terms of biological role, catalyzes the reversible reaction in which hydroxymethyl group from 5,10-methylenetetrahydrofolate is transferred onto alpha-ketoisovalerate to form ketopantoate. This chain is 3-methyl-2-oxobutanoate hydroxymethyltransferase, found in Rhodopseudomonas palustris (strain BisB5).